Here is a 130-residue protein sequence, read N- to C-terminus: Protein PELPK2 (130 aa).

The signal sequence occupies residues 1 to 32; it reads MTLKKSFSASLLSPFLIICLIALLSVPVSVGA. 13 consecutive repeat copies span residues 47 to 51, 52 to 56, 58 to 62, 63 to 67, 69 to 73, 74 to 78, 80 to 84, 91 to 95, 97 to 101, 102 to 106, 108 to 112, 113 to 117, and 121 to 125. Positions 47–125 are 13 X 5 AA tandem repeat of P-[DEGQ]-[AEFLIV]-[QPT]-K; the sequence is PELPKPEMPK…TKVPAFTMPK (79 aa). Positions 71–84 are enriched in basic and acidic residues; it reads IPKPEMPKLPEIQK. A disordered region spans residues 71–130; that stretch reads IPKPEMPKLPEIQKPELPTFPELPKMPEFPKFDFPKLPELPKPEETKVPAFTMPKFPGSP. The segment covering 98–117 has biased composition (basic and acidic residues); that stretch reads EFPKFDFPKLPELPKPEETK.

Its subcellular location is the secreted. The protein localises to the cell wall. This Arabidopsis thaliana (Mouse-ear cress) protein is Protein PELPK2.